A 488-amino-acid chain; its full sequence is Putative serine carboxypeptidase-like 30 (488 aa).

The N-terminal stretch at 1–28 (MDNHTKSFSSLLISLWFTALLILVEMVS) is a signal peptide. Disulfide bonds link C99-C368, C262-C275, and C299-C336. N150 carries N-linked (GlcNAc...) asparagine glycosylation. Residue S192 is part of the active site. N263 is a glycosylation site (N-linked (GlcNAc...) asparagine). N-linked (GlcNAc...) asparagine glycosylation is found at N364 and N375. Catalysis depends on residues D405 and H457.

The protein belongs to the peptidase S10 family. As to expression, expression not detected.

It localises to the secreted. Its function is as follows. Probable carboxypeptidase. The polypeptide is Putative serine carboxypeptidase-like 30 (SCPL30) (Arabidopsis thaliana (Mouse-ear cress)).